We begin with the raw amino-acid sequence, 251 residues long: MSFIAIIPARFASSRLPGKPLADINGKPMVVRVMERAQASGADRVIVATDHQGVVEAVERAGGEVYLTRPDHQSGTERLQEVIDRYDFPDDRIIVNVQGDEPLIPPQIILQVADNLAGAEAGMATLAVPITTAEEAFNPNAVKVVVDARGYALYFSRATIPWDREGFARSREHLSHSLLRHIGIYAYRADFIRRYVSWSASPLEKIEILEQLRVLWYGEKIHVAVSSVAPGMGVDTPEELAQVRLLQQQLD.

It belongs to the KdsB family.

Its subcellular location is the cytoplasm. The enzyme catalyses 3-deoxy-alpha-D-manno-oct-2-ulosonate + CTP = CMP-3-deoxy-beta-D-manno-octulosonate + diphosphate. It functions in the pathway nucleotide-sugar biosynthesis; CMP-3-deoxy-D-manno-octulosonate biosynthesis; CMP-3-deoxy-D-manno-octulosonate from 3-deoxy-D-manno-octulosonate and CTP: step 1/1. The protein operates within bacterial outer membrane biogenesis; lipopolysaccharide biosynthesis. Activates KDO (a required 8-carbon sugar) for incorporation into bacterial lipopolysaccharide in Gram-negative bacteria. The polypeptide is 3-deoxy-manno-octulosonate cytidylyltransferase (Sodalis glossinidius (strain morsitans)).